The primary structure comprises 1388 residues: ESX-5 secretion system protein EccC5 (1388 aa).

2 helical membrane-spanning segments follow: residues 38-58 (WLIV…AMVF) and 65-85 (FGGV…MMMF). FtsK domains are found at residues 477 to 679 (GELL…GAAQ), 855 to 1049 (QPPW…EDAK), and 1158 to 1351 (LQPV…DPDE). ATP-binding positions include 500–507 (GTTGSGKS), 873–880 (GAGGSGKT), and 1175–1182 (GRRECGRT).

In terms of assembly, part of the ESX-5 / type VII secretion system (T7SS), which is composed of cytosolic and membrane components. The ESX-5 membrane complex is composed of EccB5, EccC5, EccD5 and EccE5.

It is found in the cell inner membrane. Its function is as follows. Part of the ESX-5 specialized secretion system, which is responsible for the secretion of EsxN and a number of PE_PGRS and PPE proteins. This component is essential for ESX-5 complex stability and secretion. This chain is ESX-5 secretion system protein EccC5, found in Mycobacterium marinum (strain ATCC BAA-535 / M).